A 195-amino-acid polypeptide reads, in one-letter code: Rho-related protein racB (195 aa).

A GTP-binding site is contributed by 10 to 17; sequence GDGAVGKT. The short motif at 32-40 is the Effector region element; that stretch reads YVPTVFDNY. Residues 57-61 and 115-118 contribute to the GTP site; these read DTAGQ and TKCD. At C192 the chain carries Cysteine methyl ester. The S-geranylgeranyl cysteine moiety is linked to residue C192. A propeptide spans 193–195 (removed in mature form); the sequence is SIL.

This sequence belongs to the small GTPase superfamily. Rho family. In terms of assembly, interacts with pakB.

Its subcellular location is the cell membrane. This chain is Rho-related protein racB (racB), found in Dictyostelium discoideum (Social amoeba).